Here is a 170-residue protein sequence, read N- to C-terminus: Peptide deformylase 1 (170 aa).

Residues C92 and H135 each contribute to the Fe cation site. The active site involves E136. H139 provides a ligand contact to Fe cation.

The protein belongs to the polypeptide deformylase family. Fe(2+) serves as cofactor.

It carries out the reaction N-terminal N-formyl-L-methionyl-[peptide] + H2O = N-terminal L-methionyl-[peptide] + formate. Functionally, removes the formyl group from the N-terminal Met of newly synthesized proteins. Requires at least a dipeptide for an efficient rate of reaction. N-terminal L-methionine is a prerequisite for activity but the enzyme has broad specificity at other positions. The protein is Peptide deformylase 1 of Coxiella burnetii (strain RSA 493 / Nine Mile phase I).